The chain runs to 491 residues: MTDELNSQFTAVWNTVVAELNGDDNQYLSSFPPLTPQQRAWLTLVKPLTMAEGFALLSVPSSFVQNEIERHLRGPIVEALSRRLGENVELGVRIAAPAPGEDSEVAGAAPEVELDEVDETTEALASAHESWPSYFINRPGGADKAETPDTSLNARYTFESFVIGASNRFSHAAAVAVSEAPARAYNPLFIWGESGLGKTHLLHAAGNYAQRLFPGMRVKYVSTEEFTNDFINSLRDDRRVAFKRSYRDIDVLLVDDIQFIEGKEGIQEEFFHTFNTLHNANKQIVISSDRPPKGLATLEDRLRTRFEWGLITDVQPPELETRIAILRKKAQMDRLDVPDDVLELIASRIERNIRELEGALIRVTAFASLNKSPIELSLAEIVLRDLIPDANAIQISAATIMAVTAEYFDTTVEELRGPGKTRALAQARQIAMYLCRELTDLSLPKIGQTFGRDHTTVMYADKKVRGEMAQRREVFDHVKELTARIRQRSRH.

A domain I, interacts with DnaA modulators region spans residues 1–86 (MTDELNSQFT…VEALSRRLGE (86 aa)). The interval 86 to 150 (ENVELGVRIA…GADKAETPDT (65 aa)) is domain II. Residues 151-367 (SLNARYTFES…GALIRVTAFA (217 aa)) form a domain III, AAA+ region region. Positions 195, 197, 198, and 199 each coordinate ATP. The domain IV, binds dsDNA stretch occupies residues 368 to 491 (SLNKSPIELS…TARIRQRSRH (124 aa)).

It belongs to the DnaA family. In terms of assembly, oligomerizes as a right-handed, spiral filament on DNA at oriC.

The protein resides in the cytoplasm. Plays an essential role in the initiation and regulation of chromosomal replication. ATP-DnaA binds to the origin of replication (oriC) to initiate formation of the DNA replication initiation complex once per cell cycle. Binds the DnaA box (a 9 base pair repeat at the origin) and separates the double-stranded (ds)DNA. Forms a right-handed helical filament on oriC DNA; dsDNA binds to the exterior of the filament while single-stranded (ss)DNA is stabiized in the filament's interior. The ATP-DnaA-oriC complex binds and stabilizes one strand of the AT-rich DNA unwinding element (DUE), permitting loading of DNA polymerase. After initiation quickly degrades to an ADP-DnaA complex that is not apt for DNA replication. Binds acidic phospholipids. This is Chromosomal replication initiator protein DnaA from Mycobacteroides abscessus (strain ATCC 19977 / DSM 44196 / CCUG 20993 / CIP 104536 / JCM 13569 / NCTC 13031 / TMC 1543 / L948) (Mycobacterium abscessus).